The primary structure comprises 403 residues: 4-hydroxy-3-methylbut-2-en-1-yl diphosphate synthase (flavodoxin) (403 aa).

Over residues 1-16 (MNTENPIEKPFRKTGD) the composition is skewed to basic and acidic residues. The disordered stretch occupies residues 1–31 (MNTENPIEKPFRKTGDPVDLTSESPLHPRRK). [4Fe-4S] cluster-binding residues include cysteine 291, cysteine 294, cysteine 326, and glutamate 333.

The protein belongs to the IspG family. Requires [4Fe-4S] cluster as cofactor.

It carries out the reaction (2E)-4-hydroxy-3-methylbut-2-enyl diphosphate + oxidized [flavodoxin] + H2O + 2 H(+) = 2-C-methyl-D-erythritol 2,4-cyclic diphosphate + reduced [flavodoxin]. The protein operates within isoprenoid biosynthesis; isopentenyl diphosphate biosynthesis via DXP pathway; isopentenyl diphosphate from 1-deoxy-D-xylulose 5-phosphate: step 5/6. Functionally, converts 2C-methyl-D-erythritol 2,4-cyclodiphosphate (ME-2,4cPP) into 1-hydroxy-2-methyl-2-(E)-butenyl 4-diphosphate. The sequence is that of 4-hydroxy-3-methylbut-2-en-1-yl diphosphate synthase (flavodoxin) from Bifidobacterium longum (strain NCC 2705).